A 395-amino-acid polypeptide reads, in one-letter code: Protein HIGH CHLOROPHYLL FLUORESCENCE PHENOTYPE 244, chloroplastic (395 aa).

A chloroplast-targeting transit peptide spans 1–64 (MASLRLPAQL…ERSIVVPVTC (64 aa)).

It belongs to the NmrA-type oxidoreductase family. As to quaternary structure, component of a high molecular weight complex containing OHP1, OHP2 and HCF244, and PSII core proteins D1/D2, HCF136 and HCF173. Interacts with OHP1. Forms a trimeric complex with OHP1 and OHP2 that mutually stabilizes each subunit.

It is found in the plastid. The protein localises to the chloroplast stroma. Its subcellular location is the chloroplast thylakoid membrane. In terms of biological role, auxiliary factor required, together with HCF173, for the biogenesis of photosystem II (PSII), especially for the synthesis of the reaction center proteins (e.g. D1), via the regulation of the corresponding mRNA (e.g. psbA) translation initiation (ribosomal loading) and stabilization. Forms a trimeric complex with OHP1 and OHP2 that is required to promote PSII core subunit assembly. The trimeric complex forms a transient PSII reaction center-like complex with PsbA, PsbD, PsbE, PsbF and PsbI subunits in thylakoids for early assembly of PSII as well as PSII repair. The trimeric complex is required for the recruitment of ribosomes to the psbA mRNA during PSII biogenesis and repair. The chain is Protein HIGH CHLOROPHYLL FLUORESCENCE PHENOTYPE 244, chloroplastic from Arabidopsis thaliana (Mouse-ear cress).